A 193-amino-acid chain; its full sequence is Peptidyl-tRNA hydrolase (193 aa).

His-17 is a tRNA binding site. His-22 serves as the catalytic Proton acceptor. TRNA contacts are provided by Phe-68, Asn-70, and Asn-116.

Belongs to the PTH family. As to quaternary structure, monomer.

The protein localises to the cytoplasm. The catalysed reaction is an N-acyl-L-alpha-aminoacyl-tRNA + H2O = an N-acyl-L-amino acid + a tRNA + H(+). Hydrolyzes ribosome-free peptidyl-tRNAs (with 1 or more amino acids incorporated), which drop off the ribosome during protein synthesis, or as a result of ribosome stalling. Its function is as follows. Catalyzes the release of premature peptidyl moieties from peptidyl-tRNA molecules trapped in stalled 50S ribosomal subunits, and thus maintains levels of free tRNAs and 50S ribosomes. The sequence is that of Peptidyl-tRNA hydrolase from Xanthomonas euvesicatoria pv. vesicatoria (strain 85-10) (Xanthomonas campestris pv. vesicatoria).